The primary structure comprises 639 residues: Methyl-accepting chemotaxis protein McpS (639 aa).

The Cytoplasmic portion of the chain corresponds to 1–13; that stretch reads MNSWFANISVNLK. A helical membrane pass occupies residues 14 to 34; that stretch reads LGLGFGLVLVLTGLLALTGWT. The Periplasmic segment spans residues 35–288; it reads SLGSLIDRSN…RDIESTQARS (254 aa). The 243-residue stretch at 41 to 283 folds into the HBM domain; the sequence is DRSNWMGDIG…IQLERRDIES (243 aa). Position 60–65 (60–65) interacts with (S)-malate; sequence RIARLQ. 60–65 contacts succinate; sequence RIARLQ. Acetate is bound by residues Asp-138, Arg-183, Arg-187, and Tyr-236. Positions 191–245 form a coiled coil; the sequence is AENSSANEQAALRQLDAALADTDNLKRQLPSEDARLQQFENAVLAYRDAVRQFRD. The (S)-malate site is built by Arg-254 and Thr-258. Residue Arg-254 coordinates succinate. The helical transmembrane segment at 289–309 threads the bilayer; that stretch reads LQAIATLLALLVGVLAAVLIT. The HAMP domain occupies 310-362; sequence RQITRPLQDTLVAVEKIASGDLTQHMRVTRRDELGVLQQGIARMGTTLRELIS. The Cytoplasmic portion of the chain corresponds to 310-639; sequence RQITRPLQDT…LQTLVSQFRV (330 aa). The Methyl-accepting transducer domain occupies 367–603; sequence GVTQIASAAE…EISRSILNVR (237 aa).

This sequence belongs to the methyl-accepting chemotaxis (MCP) protein family. In terms of assembly, homodimer. Exists as a mixture of monomers and dimers in solution. Ligand binding stabilizes the dimeric form. In terms of processing, methylated by CheR2.

It is found in the cell membrane. With respect to regulation, binding of citrate to the ligand-binding domain reduces the chemotaxis towards the strong attractants such as malate and succinate. However, in physiologically relevant niches, citrate is mostly complexed with magnesium or calcium ions, and does not bind McpS. Its function is as follows. Chemotactic-signal transducers respond to changes in the concentration of attractants and repellents in the environment, transduce a signal from the outside to the inside of the cell, and facilitate sensory adaptation through the variation of the level of methylation. McpS is a specific chemoreceptor for 6 tricarboxylic acid (TCA) cycle intermediates (succinate, fumarate, malate, oxaloacetate, citrate and isocitrate), butyrate and acetate. Malate, succinate, fumarate and oxaloacetate cause the strongest chemotactic response. The chain is Methyl-accepting chemotaxis protein McpS (mcpS) from Pseudomonas putida (strain ATCC 47054 / DSM 6125 / CFBP 8728 / NCIMB 11950 / KT2440).